The chain runs to 473 residues: Pyruvate kinase (473 aa).

Position 32 (Arg32) interacts with substrate. The K(+) site is built by Asn34, Ser36, Asp66, and Thr67. 34–37 contacts ATP; sequence NFSH. The ATP site is built by Arg73 and Lys155. Glu221 lines the Mg(2+) pocket. Gly244, Asp245, and Thr277 together coordinate substrate. Asp245 serves as a coordination point for Mg(2+).

Belongs to the pyruvate kinase family. Homotetramer. The cofactor is Mg(2+). It depends on K(+) as a cofactor.

The enzyme catalyses pyruvate + ATP = phosphoenolpyruvate + ADP + H(+). Its pathway is carbohydrate degradation; glycolysis; pyruvate from D-glyceraldehyde 3-phosphate: step 5/5. This is Pyruvate kinase (pyk) from Clostridium acetobutylicum (strain ATCC 824 / DSM 792 / JCM 1419 / IAM 19013 / LMG 5710 / NBRC 13948 / NRRL B-527 / VKM B-1787 / 2291 / W).